The sequence spans 141 residues: Large ribosomal subunit protein uL11 (141 aa).

Belongs to the universal ribosomal protein uL11 family. As to quaternary structure, part of the ribosomal stalk of the 50S ribosomal subunit. Interacts with L10 and the large rRNA to form the base of the stalk. L10 forms an elongated spine to which L12 dimers bind in a sequential fashion forming a multimeric L10(L12)X complex. Post-translationally, one or more lysine residues are methylated.

Forms part of the ribosomal stalk which helps the ribosome interact with GTP-bound translation factors. The sequence is that of Large ribosomal subunit protein uL11 from Chlamydia felis (strain Fe/C-56) (Chlamydophila felis).